The chain runs to 148 residues: uncharacterized protein (148 aa).

Residues 97-112 (KKLDEQRMPGKPKNTE) are compositionally biased toward basic and acidic residues. Residues 97–126 (KKLDEQRMPGKPKNTEGSKSTIRKKANVGN) are disordered.

This is an uncharacterized protein from Caenorhabditis elegans.